The sequence spans 81 residues: Sulfur carrier protein TusA (81 aa).

Residue Cys-19 is the Cysteine persulfide intermediate of the active site.

The protein belongs to the sulfur carrier protein TusA family.

It is found in the cytoplasm. In terms of biological role, sulfur carrier protein which probably makes part of a sulfur-relay system. This chain is Sulfur carrier protein TusA, found in Shewanella woodyi (strain ATCC 51908 / MS32).